The primary structure comprises 529 residues: T-complex protein 1 subunit delta (529 aa).

Belongs to the TCP-1 chaperonin family. As to quaternary structure, heterooligomeric complex of about 850 to 900 kDa that forms two stacked rings, 12 to 16 nm in diameter.

Its subcellular location is the cytoplasm. Molecular chaperone; assists the folding of proteins upon ATP hydrolysis. Known to play a role, in vitro, in the folding of actin and tubulin. This is T-complex protein 1 subunit delta (CCT4) from Eremothecium gossypii (strain ATCC 10895 / CBS 109.51 / FGSC 9923 / NRRL Y-1056) (Yeast).